A 188-amino-acid chain; its full sequence is GTPase KRas (188 aa).

Residues 10–18 (GAGGVGKSA), 29–35 (VDEYDPT), 59–60 (AG), and 116–119 (NKCD) each bind GTP. Positions 32-40 (YDPTIEDSY) match the Effector region motif. The interval 168–188 (EKMSKDGKKKKKKTKTKCIIM) is disordered. Residue cysteine 185 is modified to Cysteine methyl ester. Cysteine 185 carries the S-farnesyl cysteine lipid modification. The propeptide at 186 to 188 (IIM) is removed in mature form.

It belongs to the small GTPase superfamily. Ras family.

It localises to the cell membrane. It is found in the cytoplasm. It catalyses the reaction GTP + H2O = GDP + phosphate + H(+). Alternates between an inactive form bound to GDP and an active form bound to GTP. Activated by a guanine nucleotide-exchange factor (GEF) and inactivated by a GTPase-activating protein (GAP). Its function is as follows. Ras proteins bind GDP/GTP and possess intrinsic GTPase activity. Plays an important role in the regulation of cell proliferation. May play a role in promoting oncogenic events by inducing transcriptional silencing of tumor suppressor genes (TSGs). The protein is GTPase KRas (KRAS) of Meleagris gallopavo (Wild turkey).